The following is a 440-amino-acid chain: Serine hydroxymethyltransferase (440 aa).

(6S)-5,6,7,8-tetrahydrofolate is bound by residues leucine 119 and 123–125 (GHL). Lysine 228 carries the post-translational modification N6-(pyridoxal phosphate)lysine. A (6S)-5,6,7,8-tetrahydrofolate-binding site is contributed by 370-372 (SPF).

This sequence belongs to the SHMT family. As to quaternary structure, homodimer. Pyridoxal 5'-phosphate serves as cofactor.

Its subcellular location is the cytoplasm. The catalysed reaction is (6R)-5,10-methylene-5,6,7,8-tetrahydrofolate + glycine + H2O = (6S)-5,6,7,8-tetrahydrofolate + L-serine. Its pathway is one-carbon metabolism; tetrahydrofolate interconversion. It participates in amino-acid biosynthesis; glycine biosynthesis; glycine from L-serine: step 1/1. Its function is as follows. Catalyzes the reversible interconversion of serine and glycine with tetrahydrofolate (THF) serving as the one-carbon carrier. This reaction serves as the major source of one-carbon groups required for the biosynthesis of purines, thymidylate, methionine, and other important biomolecules. Also exhibits THF-independent aldolase activity toward beta-hydroxyamino acids, producing glycine and aldehydes, via a retro-aldol mechanism. The polypeptide is Serine hydroxymethyltransferase (Chlorobium luteolum (strain DSM 273 / BCRC 81028 / 2530) (Pelodictyon luteolum)).